The chain runs to 953 residues: Atromentin synthetase invA5 (953 aa).

An adenylation (A) domain region spans residues 37 to 460 (SRAVSQYPDH…SGRIKDTVIV (424 aa)). One can recognise a Carrier domain in the interval 592 to 670 (APSTETEKTL…SLAKYVDSLI (79 aa)). The thiolation and peptide carrier (T) domain stretch occupies residues 597–667 (TEKTLAGIYA…VISSLAKYVD (71 aa)). Ser629 carries the O-(pantetheine 4'-phosphoryl)serine modification. Positions 693-795 (PIFMVHPGVG…FTGLINIPPN (103 aa)) are thioesterase (TE) domain.

It belongs to the ATP-dependent AMP-binding enzyme family.

Its pathway is secondary metabolite biosynthesis. Functionally, an L-tyrosine:2-oxoglutarate aminotransferase (probably invD) and atromentin synthetase invA5 catalyze consecutive steps to turn over L-tyrosine into atromentin, which represents the generic precursor molecule for the entire terphenylquinone and pulvinic acid family of pigments, which are widely distributed secondary metabolites in homobasidiomycetes. The first step catalyzed by the aminotransferase converts L-tyrosine in to 4-hydroxyphenylpyruvate (4-HPP). Adenylation of two 4-HPP monomers by the invA5 adenylation (A) domain, covalent tethering of the monomers as a thioester and oxoester onto the invA5 thiolation (T) and thioesterase (TE) domains, respectively, and symmetric C-C-bond formation between two monomers catalyzed by the invA5 TE domain leads to atromentin. In Paxillus involutus (Naked brimcap), this protein is Atromentin synthetase invA5 (invA5).